We begin with the raw amino-acid sequence, 560 residues long: Mitochondria-eating protein (560 aa).

Residues M1 to R294 form an interaction with YWHAG/14-3-3 protein gamma region. S13, S85, S156, and S159 each carry phosphoserine. Coiled coils occupy residues D118–R186 and D223–R248. Disordered regions lie at residues Q178 to K217 and S243 to S316. Basic and acidic residues predominate over residues E181–D209. A compositionally biased stretch (low complexity) spans R248–R262. Residues S263–S293 show a composition bias toward basic residues. The span at T300–P310 shows a compositional bias: polar residues. Residues S307, S309, and S531 each carry the phosphoserine modification.

It belongs to the MIEAP family. In terms of assembly, interacts (via coiled-coil domains) with BNIP3L (via BH3 domain). Interacts (via coiled-coil domains) with BNIP3 (via BH3 domain). Interacts with YWHAG/14-3-3 protein gamma; a protein that also plays a role in MALM.

Its subcellular location is the cytoplasm. It localises to the cytosol. It is found in the mitochondrion outer membrane. The protein resides in the mitochondrion matrix. In terms of biological role, key regulator of mitochondrial quality that mediates the repairing or degradation of unhealthy mitochondria in response to mitochondrial damage. Mediator of mitochondrial protein catabolic process (also named MALM) by mediating the degradation of damaged proteins inside mitochondria by promoting the accumulation in the mitochondrial matrix of hydrolases that are characteristic of the lysosomal lumen. Also involved in mitochondrion degradation of damaged mitochondria by promoting the formation of vacuole-like structures (named MIV), which engulf and degrade unhealthy mitochondria by accumulating lysosomes. The physical interaction of SPATA18/MIEAP, BNIP3 and BNIP3L/NIX at the mitochondrial outer membrane regulates the opening of a pore in the mitochondrial double membrane in order to mediate the translocation of lysosomal proteins from the cytoplasm to the mitochondrial matrix. Binds cardiolipin. May form molecular condensates (non-membrane-bounded organelles) within mitochondria that compartmentalize and promote cardiolipin metabolism. In Sus scrofa (Pig), this protein is Mitochondria-eating protein (SPATA18).